A 399-amino-acid polypeptide reads, in one-letter code: Coenzyme A biosynthesis bifunctional protein CoaBC (399 aa).

The interval 1 to 190 (MQTLAGKKIL…FQPKVLEGKS (190 aa)) is phosphopantothenoylcysteine decarboxylase. The Proton donor role is filled by Cys159. Positions 191 to 399 (ILISAGPTRE…KILEKMRELM (209 aa)) are phosphopantothenate--cysteine ligase. CTP contacts are provided by residues Asp279, Lys289, 307-310 (PDIV), Phe326, Lys340, and Lys344.

It in the N-terminal section; belongs to the HFCD (homo-oligomeric flavin containing Cys decarboxylase) superfamily. The protein in the C-terminal section; belongs to the PPC synthetase family. Mg(2+) serves as cofactor. Requires FMN as cofactor.

The enzyme catalyses N-[(R)-4-phosphopantothenoyl]-L-cysteine + H(+) = (R)-4'-phosphopantetheine + CO2. It catalyses the reaction (R)-4'-phosphopantothenate + L-cysteine + CTP = N-[(R)-4-phosphopantothenoyl]-L-cysteine + CMP + diphosphate + H(+). The protein operates within cofactor biosynthesis; coenzyme A biosynthesis; CoA from (R)-pantothenate: step 2/5. It participates in cofactor biosynthesis; coenzyme A biosynthesis; CoA from (R)-pantothenate: step 3/5. Catalyzes two sequential steps in the biosynthesis of coenzyme A. In the first step cysteine is conjugated to 4'-phosphopantothenate to form 4-phosphopantothenoylcysteine. In the second step the latter compound is decarboxylated to form 4'-phosphopantotheine. The polypeptide is Coenzyme A biosynthesis bifunctional protein CoaBC (Vibrio parahaemolyticus serotype O3:K6 (strain RIMD 2210633)).